A 53-amino-acid chain; its full sequence is Small polypeptide DEVIL 16 (53 aa).

Residue N6 is glycosylated (N-linked (GlcNAc...) asparagine). A required for DVL/RTFL small polypeptide activity region spans residues 14-45; sequence TFGQKCSHVVKKQRAKFYILRRCIAMLVCWHD. The chain crosses the membrane as a helical span at residues 30–46; the sequence is FYILRRCIAMLVCWHDQ.

This sequence belongs to the DVL/RTFL small polypeptides family. As to expression, mostly expressed in stems, flower buds, flowers and seedling shoots, to a lesser extent, in roots and young cauline leaves, but not in mature rosette leaves. Barely observed in cotyledons and leaf primordia.

Its subcellular location is the cell membrane. Small polypeptide acting as a regulatory molecule which coordinates cellular responses required for differentiation, growth and development, probably by restricting polar cell proliferation in lateral organs (e.g. leaves) and coordinating socket cell recruitment and differentiation at trichome sites. Regulates the positional cue and cell proliferation along the body axis. The protein is Small polypeptide DEVIL 16 of Arabidopsis thaliana (Mouse-ear cress).